A 395-amino-acid chain; its full sequence is Non-homologous end joining protein Ku (395 aa).

Residues 9-181 (ISFGLVSIPI…PPEDAAPDGD (173 aa)) enclose the Ku domain. The disordered stretch occupies residues 252-395 (RAARTSRDDE…SASSRKRTSA (144 aa)). Polar residues-rich tracts occupy residues 283–292 (SSKTSGQSSG) and 311–320 (GKTVTRSGDS). A compositionally biased stretch (basic residues) spans 351–361 (TARKTTAKKTT). Positions 362 to 371 (AKGTTGTTAA) are enriched in low complexity.

Belongs to the prokaryotic Ku family. Homodimer. Interacts with LigD.

In terms of biological role, with LigD forms a non-homologous end joining (NHEJ) DNA repair enzyme, which repairs dsDNA breaks with reduced fidelity. Binds linear dsDNA with 5'- and 3'- overhangs but not closed circular dsDNA nor ssDNA. Recruits and stimulates the ligase activity of LigD. The chain is Non-homologous end joining protein Ku from Streptomyces griseus subsp. griseus (strain JCM 4626 / CBS 651.72 / NBRC 13350 / KCC S-0626 / ISP 5235).